The chain runs to 1028 residues: Endosome/lysosome-associated apoptosis and autophagy regulator family member 2 (1028 aa).

The N-terminal stretch at Met1–Ala47 is a signal peptide. At Gly48–Lys928 the chain is on the extracellular side. Asn168 is a glycosylation site (N-linked (GlcNAc...) asparagine). Cystine bridges form between Cys292–Cys309, Cys322–Cys345, and Cys325–Cys357. N-linked (GlcNAc...) asparagine glycosylation is found at Asn404 and Asn690. The MRH domain maps to Ser671 to Leu876. 4 disulfide bridges follow: Cys673-Cys719, Cys729-Cys757, Cys826-Cys862, and Cys838-Cys874. Residues Val929–Trp949 traverse the membrane as a helical segment. Residues Lys950 to Ile1028 are Cytoplasmic-facing. Residue Ser1017 is modified to Phosphoserine.

It belongs to the ELAPOR family.

Its subcellular location is the cell membrane. Its function is as follows. Functions as a regulator of the BMP signaling pathway and may be involved in epidermal differentiation. This is Endosome/lysosome-associated apoptosis and autophagy regulator family member 2 from Mus musculus (Mouse).